A 398-amino-acid polypeptide reads, in one-letter code: MAVKVVMPKLGMAMKQGEVSIWNKKVGDPVEKGESIASIQSEKIEMEIEAPEKGTLIDIKVKEGEEVPPGTAICYIGDANESVQEEAGAPVAEDNMPQAVQPVKQENKPAASKKDRMKISPVARKIAEKAGLDLKQLKGTGPGGRIVKDDVTKALAEQKKDQAKPVSEQKAQEIPVTGMRKVIAARMQESLANSAQLTITMKADITKLATLQKQLSPTAEERYGTKLTITHFVSRAAVLALQAHPVLNSFYQNERIITHPHVHLGMAVALENGLVVPVIRHAEKLSLIELAQSISENAKKAREGRAGSEELQGSTFSITNLGAFGVEHFTPILNPPETGILGIGASYDTPVYQGEEIVRSTILPLSLTFDHRACDGAPAAAFLKAMKTYLEEPAALIL.

Positions 2-77 (AVKVVMPKLG…PPGTAICYIG (76 aa)) constitute a Lipoyl-binding domain. Lys-43 carries the post-translational modification N6-lipoyllysine. The region spanning 118 to 155 (KISPVARKIAEKAGLDLKQLKGTGPGGRIVKDDVTKAL) is the Peripheral subunit-binding (PSBD) domain. Residues His-371 and Asp-375 contribute to the active site.

The protein belongs to the 2-oxoacid dehydrogenase family. Requires (R)-lipoate as cofactor.

The catalysed reaction is N(6)-[(R)-dihydrolipoyl]-L-lysyl-[protein] + acetyl-CoA = N(6)-[(R)-S(8)-acetyldihydrolipoyl]-L-lysyl-[protein] + CoA. Its pathway is ketone degradation; acetoin degradation. This is Dihydrolipoyllysine-residue acetyltransferase component of acetoin cleaving system (acoC) from Bacillus subtilis (strain 168).